Here is an 82-residue protein sequence, read N- to C-terminus: Omega-conotoxin-like TxO6 (82 aa).

An N-terminal signal peptide occupies residues 1-22 (MKLTCVVIVAVLFLTAWTLVMA). A propeptide spanning residues 23–50 (DDSNNGLANLFSKSRDEMEDPEAAKLEK) is cleaved from the precursor. 3 cysteine pairs are disulfide-bonded: cysteine 53/cysteine 71, cysteine 60/cysteine 76, and cysteine 70/cysteine 81.

It belongs to the conotoxin O1 superfamily. As to expression, expressed by the venom duct.

Its subcellular location is the secreted. Its function is as follows. Omega-conotoxins act at presynaptic membranes, they bind and block voltage-gated calcium channels (Cav). The sequence is that of Omega-conotoxin-like TxO6 from Conus textile (Cloth-of-gold cone).